The sequence spans 160 residues: Ubiquitin-like protein ATG12 (160 aa).

Positions 1–40 are disordered; sequence MSETPKDQGPSSPSPSPSPSAASPMPLADNEVAGSGASSP. Residue Gly-160 forms a Glycyl lysine isopeptide (Gly-Lys) (interchain with K-102 in ATG5) linkage.

This sequence belongs to the ATG12 family. In terms of assembly, forms a conjugate with ATG5. Forms a thioester bond with the 'Cys-196' of ATG10. Interacts with the ATG7 C-terminal 40 amino acids domain. The ATG12-ATG5 conjugate forms a complex with several units of ATG16. The ATG12-ATG5 conjugate also associates with ATG3.

It is found in the preautophagosomal structure membrane. Its function is as follows. Ubiquitin-like protein involved in cytoplasm to vacuole transport (Cvt), autophagy vesicles formation, mitophagy, and nucleophagy. Conjugation with ATG5 through a ubiquitin-like conjugating system involving also ATG7 as an E1-like activating enzyme and ATG10 as an E2-like conjugating enzyme, is essential for its function. The ATG12-ATG5 conjugate acts as an E3-like enzyme which is required for lipidation of ATG8 and ATG8 association to the vesicle membranes. ATG12-ATG5 rearranges the ATG3 catalytic center and enhances its E2 activity. Autophagy is required for proper vegetative growth, asexual/sexual reproduction, and full virulence. Autophagy is particularly involved in the biosynthesis of deoxynivalenol (DON), an important virulence determinant. The protein is Ubiquitin-like protein ATG12 of Gibberella zeae (strain ATCC MYA-4620 / CBS 123657 / FGSC 9075 / NRRL 31084 / PH-1) (Wheat head blight fungus).